A 448-amino-acid polypeptide reads, in one-letter code: Guanine deaminase (448 aa).

Zn(2+) contacts are provided by His-74 and His-76. Residues 76–79 (HAPQ), 204–205 (RF), 231–234 (HISE), and Asp-319 each bind substrate. Zn(2+) contacts are provided by His-231 and Asp-319.

Belongs to the metallo-dependent hydrolases superfamily. ATZ/TRZ family. Requires Zn(2+) as cofactor.

It carries out the reaction guanine + H2O + H(+) = xanthine + NH4(+). The protein operates within purine metabolism; guanine degradation; xanthine from guanine: step 1/1. Strongly inhibited by p-chloromercuribenzoate (PCMB). Potassium cyanide (KCN) strongly inhibits activity towards 7,8-dihydropterin but has almost no effect on activity towards guanine. Pterin inhibits activity towards guanine but has little effect on activity towards 7,8-dihydropterin. Its function is as follows. Catalyzes the hydrolytic deamination of guanine, producing xanthine and ammonia. Also has 7,8-dihydropterin deaminase activity, which plays a role in synthesis of the red eye pigment aurodrosopterin. In Drosophila melanogaster (Fruit fly), this protein is Guanine deaminase.